A 395-amino-acid chain; its full sequence is uncharacterized protein (395 aa).

This is an uncharacterized protein from Escherichia coli (strain K12).